The sequence spans 294 residues: Cytidine deaminase (294 aa).

CMP/dCMP-type deaminase domains follow at residues 48–168 (NDDE…FGPK) and 187–294 (DNTS…RVTL). Substrate is bound at residue 89–91 (NME). Residue H102 participates in Zn(2+) binding. Residue E104 is the Proton donor of the active site. 2 residues coordinate Zn(2+): C129 and C132.

Belongs to the cytidine and deoxycytidylate deaminase family. Homodimer. The cofactor is Zn(2+).

It carries out the reaction cytidine + H2O + H(+) = uridine + NH4(+). The catalysed reaction is 2'-deoxycytidine + H2O + H(+) = 2'-deoxyuridine + NH4(+). In terms of biological role, this enzyme scavenges exogenous and endogenous cytidine and 2'-deoxycytidine for UMP synthesis. This Proteus mirabilis (strain HI4320) protein is Cytidine deaminase.